A 182-amino-acid chain; its full sequence is MLSPKRTKFRKQQRGRMRGVATRGNKIAFGQFALQAQECGWITSRQIEASRRAMTRYVKRGGQIWIRIFPDKPVTMRPAETRMGSGKGNPEFWVAVVKPGRILFEMGGEEITEEIAKEAMRLAQYKLPIKTKFLALAEGEKPTQVGKAPPKSSFLPSDETETAAAQAGTEASSASSVTPLES.

Positions 140-182 (EKPTQVGKAPPKSSFLPSDETETAAAQAGTEASSASSVTPLES) are disordered. Over residues 162–176 (TAAAQAGTEASSASS) the composition is skewed to low complexity.

It belongs to the universal ribosomal protein uL16 family. In terms of assembly, part of the 50S ribosomal subunit.

Binds 23S rRNA and is also seen to make contacts with the A and possibly P site tRNAs. This chain is Large ribosomal subunit protein uL16, found in Prochlorococcus marinus (strain SARG / CCMP1375 / SS120).